The sequence spans 328 residues: Phenylalanine--tRNA ligase alpha subunit (328 aa).

Belongs to the class-II aminoacyl-tRNA synthetase family. Phe-tRNA synthetase alpha subunit type 1 subfamily. As to quaternary structure, tetramer of two alpha and two beta subunits. Mg(2+) serves as cofactor.

The protein localises to the cytoplasm. The catalysed reaction is tRNA(Phe) + L-phenylalanine + ATP = L-phenylalanyl-tRNA(Phe) + AMP + diphosphate + H(+). This chain is Phenylalanine--tRNA ligase alpha subunit, found in Buchnera aphidicola subsp. Baizongia pistaciae (strain Bp).